We begin with the raw amino-acid sequence, 251 residues long: uncharacterized protein (251 aa).

The protein belongs to the FAM243 family.

This is an uncharacterized protein from Homo sapiens (Human).